The sequence spans 80 residues: Protein CEBPZOS (80 aa).

Residues 15 to 31 traverse the membrane as a helical segment; that stretch reads GVLAAELVGVAGAYCLF.

Its subcellular location is the mitochondrion membrane. This chain is Protein CEBPZOS, found in Mus musculus (Mouse).